We begin with the raw amino-acid sequence, 479 residues long: Pup--protein ligase (479 aa).

Glutamate 17 is a binding site for Mg(2+). Arginine 62 provides a ligand contact to ATP. Tyrosine 64 contacts Mg(2+). Catalysis depends on aspartate 66, which acts as the Proton acceptor. Glutamate 72 lines the Mg(2+) pocket. Residues serine 75 and tryptophan 432 each coordinate ATP.

The protein belongs to the Pup ligase/Pup deamidase family. Pup-conjugating enzyme subfamily.

It catalyses the reaction ATP + [prokaryotic ubiquitin-like protein]-L-glutamate + [protein]-L-lysine = ADP + phosphate + N(6)-([prokaryotic ubiquitin-like protein]-gamma-L-glutamyl)-[protein]-L-lysine.. Its pathway is protein degradation; proteasomal Pup-dependent pathway. It participates in protein modification; protein pupylation. In terms of biological role, catalyzes the covalent attachment of the prokaryotic ubiquitin-like protein modifier Pup to the proteasomal substrate proteins, thereby targeting them for proteasomal degradation. This tagging system is termed pupylation. The ligation reaction involves the side-chain carboxylate of the C-terminal glutamate of Pup and the side-chain amino group of a substrate lysine. The protein is Pup--protein ligase of Corynebacterium diphtheriae (strain ATCC 700971 / NCTC 13129 / Biotype gravis).